The sequence spans 215 residues: Adenylate kinase (215 aa).

10–15 (GAGKGT) contacts ATP. The segment at 30–59 (STGDMLRAAVKAGSPLGLKVKGVMDSGGLV) is NMP. Residues T31, R36, 57–59 (GLV), 85–88 (GFPR), and Q92 contribute to the AMP site. The tract at residues 122-159 (GRRVHAASGRVYHDLHNPPKVAGKDDETGEDLIQREDD) is LID. Residues R123 and 132 to 133 (VY) each bind ATP. 2 residues coordinate AMP: R156 and R167. Residue G201 participates in ATP binding.

The protein belongs to the adenylate kinase family. As to quaternary structure, monomer.

The protein localises to the cytoplasm. The enzyme catalyses AMP + ATP = 2 ADP. It participates in purine metabolism; AMP biosynthesis via salvage pathway; AMP from ADP: step 1/1. In terms of biological role, catalyzes the reversible transfer of the terminal phosphate group between ATP and AMP. Plays an important role in cellular energy homeostasis and in adenine nucleotide metabolism. The chain is Adenylate kinase from Azotobacter vinelandii (strain DJ / ATCC BAA-1303).